The sequence spans 415 residues: Intron-encoded DNA endonuclease aI3 (415 aa).

The interval 1-81 (MVQRWLYSTN…MPALIGGFGN (81 aa)) is COX1 exons 1 to 3 encoded. Helical transmembrane passes span 16–36 (VLYFMLAIFSGMAGTAMSLII) and 57–77 (VLVVGHAVLMIFFLVMPALIG). The segment at 82–415 (QKRYESNNNN…HLKNTYLENK (334 aa)) is COX1 intron 3 encoded.

In the C-terminal section; belongs to the LAGLIDADG endonuclease family. Requires Mg(2+) as cofactor. In terms of processing, the mature protein may arise from proteolytic cleavage of an in-frame translation of some COX1 exons plus the intron containing the aI3 open reading frame.

It is found in the mitochondrion. The protein resides in the membrane. Mitochondrial DNA endonuclease involved in intron homing. It introduces a specific double-strand break in the DNA of the COX1 gene and thus mediates the insertion of an intron, containing its own coding sequence (group I intron), into an intronless gene. Recognizes with high specificity and cleaves the sequence 5'-GGTTTTGGTAACTATTTATTAC-3'. This chain is Intron-encoded DNA endonuclease aI3 (AI3), found in Saccharomyces cerevisiae (strain ATCC 204508 / S288c) (Baker's yeast).